The sequence spans 188 residues: A-type ATP synthase subunit E (188 aa).

Belongs to the V-ATPase E subunit family. In terms of assembly, has multiple subunits with at least A(3), B(3), C, D, E, F, H, I and proteolipid K(x).

The protein resides in the cell membrane. Its function is as follows. Component of the A-type ATP synthase that produces ATP from ADP in the presence of a proton gradient across the membrane. The polypeptide is A-type ATP synthase subunit E (Archaeoglobus fulgidus (strain ATCC 49558 / DSM 4304 / JCM 9628 / NBRC 100126 / VC-16)).